Reading from the N-terminus, the 543-residue chain is Hydroxylamine reductase (543 aa).

[4Fe-4S] cluster contacts are provided by cysteine 3, cysteine 6, cysteine 15, and cysteine 21. Positions 244, 268, 312, 399, 427, 452, 486, and 488 each coordinate hybrid [4Fe-2O-2S] cluster. Cysteine 399 is subject to Cysteine persulfide.

This sequence belongs to the HCP family. [4Fe-4S] cluster serves as cofactor. It depends on hybrid [4Fe-2O-2S] cluster as a cofactor.

Its subcellular location is the cytoplasm. It catalyses the reaction A + NH4(+) + H2O = hydroxylamine + AH2 + H(+). Its function is as follows. Catalyzes the reduction of hydroxylamine to form NH(3) and H(2)O. This is Hydroxylamine reductase from Methanocella arvoryzae (strain DSM 22066 / NBRC 105507 / MRE50).